The sequence spans 355 residues: Type II methyltransferase M.MthZI (355 aa).

Belongs to the N(4)/N(6)-methyltransferase family. N(4) subfamily.

The catalysed reaction is a 2'-deoxycytidine in DNA + S-adenosyl-L-methionine = an N(4)-methyl-2'-deoxycytidine in DNA + S-adenosyl-L-homocysteine + H(+). In terms of biological role, a beta subtype methylase that recognizes the double-stranded sequence 5'-CTAG-3', methylates C-1 on both strands, and protects the DNA from cleavage by the MthZI endonuclease. The chain is Type II methyltransferase M.MthZI from Methanothermobacter thermautotrophicus (Methanobacterium thermoformicicum).